A 422-amino-acid chain; its full sequence is MTVTIENIHAREIFDSRGNPTVEVDVRLTDGTLGRAAVPSGASTGDREAVELRDGGARLQGKGVSKAVANVNGEIYEALKGQSPFNQAKLDHLMIELDGTENKSCLGANAILGVSMAIFRAAANSEKIPLYRYFGGVDLELPQPFFNVINGGVHADSGIDVQEFLITPVKRDSFRDGLKKIANIYHTLKKILSDKGLKTPVGDEGGFAPKLGTTENAIAILYQPIDSAGYFPGEKIAIAIDSSSIEFYDDKKKFYRFEGKNLTSKELLTYYDNLVEKYPALISIEDGFSEHDWEGFAAQTKARGQKIQLVGDDIFVTNPTIFKEGIKKNVANAILIKLNQIGTVTETIETISLARKAGYKTMISHRSGETVDSYIADFSVAMHAGQIKSGSMARSERVEKYNQLLRIEEDLGKDVALAQFPG.

Q162 contributes to the (2R)-2-phosphoglycerate binding site. Residue E204 is the Proton donor of the active site. Mg(2+) is bound by residues D241, E285, and D312. Residues K337, R366, S367, and K388 each coordinate (2R)-2-phosphoglycerate. The active-site Proton acceptor is K337.

It belongs to the enolase family. Mg(2+) is required as a cofactor.

The protein localises to the cytoplasm. Its subcellular location is the secreted. The protein resides in the cell surface. The catalysed reaction is (2R)-2-phosphoglycerate = phosphoenolpyruvate + H2O. The protein operates within carbohydrate degradation; glycolysis; pyruvate from D-glyceraldehyde 3-phosphate: step 4/5. In terms of biological role, catalyzes the reversible conversion of 2-phosphoglycerate (2-PG) into phosphoenolpyruvate (PEP). It is essential for the degradation of carbohydrates via glycolysis. The chain is Enolase from Streptococcus thermophilus.